The sequence spans 405 residues: MDHLPMPKFGPLAGLRVVFSGIEIAGPFAGQMFAEWGAEVIWIENVAWADTIRVQPNYPQLSRRNLHALSLNIFKDEGREAFLKLMETTDIFIEASKGPAFARRGITDEVLWQHNPKLVIAHLSGFGQYGTEEYTNLPAYNTIAQAFSGYLIQNGDVDQPMPAFPYTADYFSGLTATTAALAALHKVRETGKGESIDIAMYEVMLRMGQYFMMDYFNGGEMCPRMTKGKDPYYAGCGLYKCADGYIVMELVGITQIAECFKDIGLAHLLGTPEIPEGTQLIHRIECPYGPLVEEKLDAWLAAHTIAEVKERFAELNIACAKVLTVPELESNPQYVARESITQWQTMDGRTCKGPNIMPKFKNNPGQIWRGMPSHGMDTAAILKNIGYSENDIQELVSKGLAKVED.

2 residues coordinate CoA: lysine 97 and arginine 104. Residue aspartate 169 is the Nucleophile of the active site.

The protein belongs to the CoA-transferase III family. CaiB subfamily. In terms of assembly, homodimer.

The protein localises to the cytoplasm. It catalyses the reaction crotonobetainyl-CoA + (R)-carnitine = crotonobetaine + (R)-carnitinyl-CoA. It carries out the reaction 4-(trimethylamino)butanoyl-CoA + (R)-carnitine = (R)-carnitinyl-CoA + 4-(trimethylamino)butanoate. It functions in the pathway amine and polyamine metabolism; carnitine metabolism. Functionally, catalyzes the reversible transfer of the CoA moiety from gamma-butyrobetainyl-CoA to L-carnitine to generate L-carnitinyl-CoA and gamma-butyrobetaine. Is also able to catalyze the reversible transfer of the CoA moiety from gamma-butyrobetainyl-CoA or L-carnitinyl-CoA to crotonobetaine to generate crotonobetainyl-CoA. The chain is L-carnitine CoA-transferase from Escherichia coli O7:K1 (strain IAI39 / ExPEC).